The chain runs to 90 residues: C-C motif chemokine 4 homolog (90 aa).

Residues 1-21 form the signal peptide; the sequence is MKVSVAALAVLLIAICYQTSA. 2 disulfide bridges follow: cysteine 32–cysteine 56 and cysteine 33–cysteine 72.

It belongs to the intercrine beta (chemokine CC) family. In terms of assembly, homodimer.

Its subcellular location is the secreted. Functionally, monokine with inflammatory and chemokinetic properties. The sequence is that of C-C motif chemokine 4 homolog (CCL4) from Gallus gallus (Chicken).